Consider the following 299-residue polypeptide: Urease accessory protein UreD (299 aa).

The protein belongs to the UreD family. UreD, UreF and UreG form a complex that acts as a GTP-hydrolysis-dependent molecular chaperone, activating the urease apoprotein by helping to assemble the nickel containing metallocenter of UreC. The UreE protein probably delivers the nickel.

It is found in the cytoplasm. Required for maturation of urease via the functional incorporation of the urease nickel metallocenter. This chain is Urease accessory protein UreD, found in Natronomonas pharaonis (strain ATCC 35678 / DSM 2160 / CIP 103997 / JCM 8858 / NBRC 14720 / NCIMB 2260 / Gabara) (Halobacterium pharaonis).